The sequence spans 169 residues: NADH-quinone oxidoreductase subunit I (169 aa).

4Fe-4S ferredoxin-type domains are found at residues 61-90 and 100-129; these read RRYD…IESE and TRYD…ETHI. Residues Cys70, Cys73, Cys76, Cys80, Cys109, Cys112, Cys115, and Cys119 each coordinate [4Fe-4S] cluster.

It belongs to the complex I 23 kDa subunit family. NDH-1 is composed of 14 different subunits. Subunits NuoA, H, J, K, L, M, N constitute the membrane sector of the complex. [4Fe-4S] cluster is required as a cofactor.

The protein resides in the cell inner membrane. It catalyses the reaction a quinone + NADH + 5 H(+)(in) = a quinol + NAD(+) + 4 H(+)(out). NDH-1 shuttles electrons from NADH, via FMN and iron-sulfur (Fe-S) centers, to quinones in the respiratory chain. The immediate electron acceptor for the enzyme in this species is believed to be ubiquinone. Couples the redox reaction to proton translocation (for every two electrons transferred, four hydrogen ions are translocated across the cytoplasmic membrane), and thus conserves the redox energy in a proton gradient. This Verminephrobacter eiseniae (strain EF01-2) protein is NADH-quinone oxidoreductase subunit I.